Reading from the N-terminus, the 632-residue chain is MLRRYTYNEIIKKSHKRCSNYGIKIDIPCPSKILRDEEFNVIIQKNKALIEIARPFMEILYNFLKGSGFSLYFTEKNGVVLTIIGDQDIIRDQIQMGIIEGADMSEKSAGTNGIGTAFAENISLQISGEEHFIKVFQIWTCSSSVVHDEDGNIIGCLNLTGRRQLAHPHTLGLVVAAVKSIENHLKVKKTQNELVKTYQYLNKITDSVNLGIFAVDTKGIIKAINKSACDMLHINEEDVINKNVDTVLDSWKHILQRLRNGQSYEDEEIMYSDKKKRFNINVYPIKDKNSNITGMVGIFKDIQNVYNLVNKYINRTAKYTFDDIIGQSEAMKRLKEQIKSISNSPSTVLIQGESGTGKELIAQSIHNNSNRRSKSFVAINCGAIPKSLIESELFGYEEGAFTGAKRGGCPGKFELANEGTLFLDEIGEMPLDMQVNLLRVLQEGCITRIGGNKCVDVDVRIIAATNKNLKKEIEDGNFREDLYYRLSVIPIYVPPLRERNGDIGILIEHFLKIKADKLGKLIPEIRKNIYENLLSYGWPGNVRELENCIENIVNMNGNTSFNFENRTIKKDVNCYSDVSLEYDMCSLEELEKRAISICINQCGGNISKACRILGINRSTLYIKIKKYNIKVR.

The PAS domain maps to 197–270 (TYQYLNKITD…GQSYEDEEIM (74 aa)). The 231-residue stretch at 324 to 554 (IIGQSEAMKR…LENCIENIVN (231 aa)) folds into the Sigma-54 factor interaction domain. ATP-binding positions include 352-359 (GESGTGKE) and 416-425 (ANEGTLFLDE). A DNA-binding region (H-T-H motif) is located at residues 606–625 (ISKACRILGINRSTLYIKIK).

In Clostridium beijerinckii (Clostridium MP), this protein is Signal-transduction and transcriptional-control protein (stc).